Here is an 873-residue protein sequence, read N- to C-terminus: Potassium voltage-gated channel subfamily KQT member 3 (873 aa).

The interval 1–41 is disordered; the sequence is MGLKARRAAGAAGGGGGEGGGGGGGAANPAGGDSAVAGDEE. At 1-121 the chain is on the cytoplasmic side; sequence MGLKARRAAG…IYDALERPRG (121 aa). Gly residues predominate over residues 11 to 26; that stretch reads AAGGGGGEGGGGGGGA. At T82 the chain carries Phosphothreonine. The chain crosses the membrane as a helical span at residues 122-144; that stretch reads WALLYHALVFLIVLGCLILAVLT. At 145–154 the chain is on the extracellular side; the sequence is TFKEYETVSG. The chain crosses the membrane as a helical span at residues 155–176; sequence DWLLLLETFAIFIFGAEFALRI. Topologically, residues 177–194 are cytoplasmic; sequence WAAGCCCRYKGWRGRLKF. A helical transmembrane segment spans residues 195 to 214; the sequence is ARKPLCMLDIFVLIASVPVV. At 215–226 the chain is on the extracellular side; the sequence is AVGNQGNVLATS. A helical; Voltage-sensor transmembrane segment spans residues 227–245; that stretch reads LRSLRFLQILRMLRMDRRG. R244 provides a ligand contact to a 1,2-diacyl-sn-glycero-3-phospho-(1D-myo-inositol-4,5-bisphosphate). Topologically, residues 246 to 257 are cytoplasmic; sequence GTWKLLGSAICA. Residues 258–283 traverse the membrane as a helical segment; sequence HSKELITAWYIGFLTLILSSFLVYLV. K260 contacts a 1,2-diacyl-sn-glycero-3-phospho-(1D-myo-inositol-4,5-bisphosphate). Over 284–303 the chain is Extracellular; that stretch reads EKDVPEMDAQGEEMKEEFET. The pore-forming intramembrane region spans 304 to 316; the sequence is YADALWWGLITLA. Positions 317 to 322 match the Selectivity filter motif; that stretch reads TIGYGD. Over 317–327 the chain is Extracellular; the sequence is TIGYGDKTPKT. A helical membrane pass occupies residues 328 to 354; the sequence is WEGRLIAATFSLIGVSFFALPAGILGS. Residues 355 to 873 lie on the Cytoplasmic side of the membrane; it reads GLALKVQEQH…SIWTPSNKPT (519 aa). Residues 357–538 are mediates interaction with calmodulin; it reads ALKVQEQHRQ…RLYKKKFKET (182 aa). K367 is a binding site for a 1,2-diacyl-sn-glycero-3-phospho-(1D-myo-inositol-4,5-bisphosphate). 3 disordered regions span residues 575 to 603, 723 to 742, and 766 to 873; these read PGPPSTPKHKKSQKGSAFTYPSQQSPRNE, RGGPSSTKAQANLPSSGSTY, and ELQG…NKPT. 3 stretches are compositionally biased toward polar residues: residues 588–601, 725–741, and 844–873; these read KGSAFTYPSQQSPR, GPSSTKAQANLPSSGST, and DPFTPSGSMPMSSTGDGISDSIWTPSNKPT.

It belongs to the potassium channel family. KQT (TC 1.A.1.15) subfamily. Kv7.3/KCNQ3 sub-subfamily. In terms of assembly, heterotetramer with KCNQ2; forms heterotetrameric M-channel responsible for the native M-current. Interacts with calmodulin; the interaction is calcium-independent, constitutive and participates in the proper assembly of a functional M-channel. Heteromultimer with KCNQ5. May associate with KCNE2. Interacts with IQCJ-SCHIP1. Interacts (via the pore module) with SLC5A3/SMIT1; forms a coregulatory complex that alters ion selectivity, voltage dependence and gating kinetics of the channel. In terms of processing, KCNQ2/KCNQ3 are ubiquitinated by NEDD4L. Ubiquitination leads to protein degradation. Degradation induced by NEDD4L is inhibited by USP36. In terms of tissue distribution, expressed in brain and sympathetic ganglia. In brain, expressed in cortex, hippocampus and at much lower levels in cerebellum. In sympathetic ganglia, expressed at approximately equal levels in both superior cervical ganglia and prevertebral ganglia.

The protein localises to the cell membrane. The catalysed reaction is K(+)(in) = K(+)(out). It catalyses the reaction Rb(+)(in) = Rb(+)(out). It carries out the reaction Cs(+)(in) = Cs(+)(out). The enzyme catalyses Na(+)(in) = Na(+)(out). With respect to regulation, phosphatidylinositol-4,5-bisphosphate (PIP2) potentiates the activation of KCNQ channels by enhancing the electro-mechanical coupling of the voltage-sensing domain (VSD) and the pore-forming domain (PD). In the closed state of the channel, PIP2 is anchored at the S2-S3 loop; upon channel activation, PIP2 interacts with the S4-S5 linker and is involved in channel gating. Calcium suppresses KCNQ2-KCNQ3 channel currents, with calcium-bound calmodulin inducing a change in channel configuration which leads to the reduction of channel affinity for PIP2 and subsequent current suppression. M-channel is blocked by XE991. Functionally, pore-forming subunit of the voltage-gated potassium (Kv) M-channel which is responsible for the M-current, a key controller of neuronal excitability. M-channel is composed of pore-forming subunits KCNQ2 and KCNQ3 assembled as heterotetramers, each subunit containing a voltage sensing domain (VSD) and a pore-forming domain (PD). The native M-current has a slowly activating and deactivating potassium conductance which plays a critical role in determining the subthreshold electrical excitability of neurons as well as the responsiveness to synaptic inputs. M-channel is selectively permeable in vitro to other cations besides potassium, in decreasing order of affinity K(+) &gt; Rb(+) &gt; Cs(+) &gt; Na(+). M-channel association with SLC5A3/SMIT1 alters channel ion selectivity, increasing Na(+) and Cs(+) permeation relative to K(+). Suppressed by activation of M1 muscarinic acetylcholine receptors. KCNQ3 also associates with KCNQ5 to form a functional channel in vitro and may also contribute to the M-current in brain. The protein is Potassium voltage-gated channel subfamily KQT member 3 of Rattus norvegicus (Rat).